The following is a 192-amino-acid chain: Shikimate kinase (192 aa).

27–32 is an ATP binding site; the sequence is GTGKTT. Mg(2+) is bound at residue Thr-31. Residues Asp-49, Arg-73, and Gly-95 each contribute to the substrate site. Arg-133 contacts ATP. Position 152 (Arg-152) interacts with substrate.

This sequence belongs to the shikimate kinase family. As to quaternary structure, monomer. Requires Mg(2+) as cofactor.

It localises to the cytoplasm. It carries out the reaction shikimate + ATP = 3-phosphoshikimate + ADP + H(+). Its pathway is metabolic intermediate biosynthesis; chorismate biosynthesis; chorismate from D-erythrose 4-phosphate and phosphoenolpyruvate: step 5/7. Its function is as follows. Catalyzes the specific phosphorylation of the 3-hydroxyl group of shikimic acid using ATP as a cosubstrate. This chain is Shikimate kinase, found in Hahella chejuensis (strain KCTC 2396).